The sequence spans 698 residues: uncharacterized protein (698 aa).

Positions 1-17 (MKKRHLLSLLALGISTA) are cleaved as a signal peptide. Residue Cys18 is the site of N-palmitoyl cysteine attachment. Cys18 carries S-diacylglycerol cysteine lipidation.

The protein to E.coli YmcA.

The protein resides in the cell membrane. This is an uncharacterized protein from Escherichia coli (strain K12).